Reading from the N-terminus, the 308-residue chain is Adipolin (308 aa).

A signal peptide spans 1 to 21; that stretch reads MWAWGWAAAALLWLQTAGAGA. Residues 36 to 119 are disordered; the sequence is DSPNITTSNR…PPGSPGVGVT (84 aa). The N-linked (GlcNAc...) asparagine glycan is linked to Asn-39. A compositionally biased stretch (basic residues) spans 82 to 93; sequence RKRCRGRDKKSR. Residues 99-113 are compositionally biased toward pro residues; the sequence is PGPPGPPGPPGPPGS. One can recognise a C1q domain in the interval 153–308; the sequence is QRLVVEAFYC…SSFSGMLLGT (156 aa).

It belongs to the adipolin/erythroferrone family. As to quaternary structure, homomultimer; disulfide-linked. Adipolin fC1QTNF12: homotrimer; disulfide-linked. Adipolin gC1QTNF12: homodimer; disulfide-linked. May interact with ERFE. Processed into Adipolin fC1QTNF12 and Adipolin gC1QTNF12 by FURIN. Insulin enhances endogenous C1QTNF12 cleavage. In terms of tissue distribution, widely expressed, with high expression in subcutaneous and epididymal white adipose tissues and brown adipose tissue. Expressed in adipocytes (at protein level).

The protein resides in the secreted. In terms of biological role, insulin-sensitizing adipocyte-secreted protein (adipokine) that regulates glucose metabolism in liver and adipose tissue. Promotes glucose uptake in adipocytes and suppresses de novo glucose production in hepatocytes via the PI3K-Akt signaling pathway. Administration lead to reduction of blood glucose. Able to attenuate inflammation in fat tissue. Acts by activating the Akt signaling in hepatocytes and adipocytes. Not able to increase insulin-stimulated glucose uptake in adipocytes. Its function is as follows. Acts by activating the MAP kinase. Increases insulin-stimulated glucose uptake in adipocytes. The chain is Adipolin (C1qtnf12) from Mus musculus (Mouse).